Consider the following 906-residue polypeptide: Cadherin-2 (906 aa).

Residues 1 to 25 (MCRIVGAPRTLLPLLAALLQASVDA) form the signal peptide. A propeptide spanning residues 26 to 159 (SGEISLCKTG…HNGYLQRQKR (134 aa)) is cleaved from the precursor. Ser-96 and Ser-135 each carry phosphoserine. 5 Cadherin domains span residues 160 to 267 (DWVI…RPEF), 268 to 392 (LHQV…GEVP), 393 to 497 (ENRV…NPYF), 498 to 603 (APNP…DNAP), and 604 to 714 (QVLP…DVDR). Topologically, residues 160 to 724 (DWVIPPINLP…IVGAGLGTGA (565 aa)) are extracellular. Glu-170 is a Ca(2+) binding site. Asn-190 is a glycosylation site (N-linked (GlcNAc...) asparagine). Asp-226, Glu-228, Asp-259, Met-260, Asn-261, Asp-262, and Asn-263 together coordinate Ca(2+). An N-linked (GlcNAc...) asparagine glycan is attached at Asn-273. Asp-293, Asp-295, and Asn-301 together coordinate Ca(2+). Asn-325 carries an N-linked (GlcNAc...) asparagine glycan. Asp-353 contributes to the Ca(2+) binding site. N-linked (GlcNAc...) asparagine glycosylation is found at Asn-357, Asn-402, Asn-572, Asn-622, Asn-651, and Asn-692. The chain crosses the membrane as a helical span at residues 725 to 746 (IIAILLCIIILLILVLMFVVWM). Topologically, residues 747 to 906 (KRRDKERQAK…LADMYGGGDD (160 aa)) are cytoplasmic. The span at 863 to 880 (SGSTAGSLSSLNSSSSGG) shows a compositional bias: low complexity. Residues 863–884 (SGSTAGSLSSLNSSSSGGEQDY) are disordered.

As to quaternary structure, homodimer (via extracellular region). Can also form heterodimers with other cadherins (via extracellular region). Dimerization occurs in trans, i.e. with a cadherin chain from another cell. Interacts with CDCP1. Interacts with PCDH8; this complex may also include TAOK2. The interaction with PCDH8 may lead to internalization through TAOK2/p38 MAPK pathway. Identified in a complex containing FGFR4, NCAM1, CDH2, PLCG1, FRS2, SRC, SHC1, GAP43 and CTTN. May interact with OBSCN (via protein kinase domain 2). Interacts with FBXO45. In terms of processing, cleaved by MMP24. Ectodomain cleavage leads to the generation of a soluble 90 kDa N-terminal soluble fragment and a 45 kDa membrane-bound C-terminal fragment 1 (CTF1), which is further cleaved by gamma-secretase into a 35 kDa. Cleavage in neural stem cells by MMP24 affects CDH2-mediated anchorage of neural stem cells to ependymocytes in the adult subependymal zone, leading to modulate neural stem cell quiescence. May be phosphorylated by OBSCN. In terms of tissue distribution, detected in liver, kidney, heart and brain capillaries.

It is found in the cell membrane. Its subcellular location is the sarcolemma. The protein resides in the cell junction. The protein localises to the cell surface. It localises to the desmosome. It is found in the adherens junction. Functionally, calcium-dependent cell adhesion protein; preferentially mediates homotypic cell-cell adhesion by dimerization with a CDH2 chain from another cell. Cadherins may thus contribute to the sorting of heterogeneous cell types. Acts as a regulator of neural stem cells quiescence by mediating anchorage of neural stem cells to ependymocytes in the adult subependymal zone: upon cleavage by MMP24, CDH2-mediated anchorage is affected, leading to modulate neural stem cell quiescence. Plays a role in cell-to-cell junction formation between pancreatic beta cells and neural crest stem (NCS) cells, promoting the formation of processes by NCS cells. Required for proper neurite branching. Required for pre- and postsynaptic organization. CDH2 may be involved in neuronal recognition mechanism. In hippocampal neurons, may regulate dendritic spine density. The polypeptide is Cadherin-2 (CDH2) (Bos taurus (Bovine)).